A 397-amino-acid chain; its full sequence is Elongation factor Tu (397 aa).

The tr-type G domain occupies 10 to 206 (KPHVNVGTIG…TMDTYFPQPE (197 aa)). The segment at 19–26 (GHVDHGKT) is G1. 19–26 (GHVDHGKT) is a binding site for GTP. Thr-26 lines the Mg(2+) pocket. The tract at residues 60–64 (GITIA) is G2. The G3 stretch occupies residues 81–84 (DCPG). Residues 81–85 (DCPGH) and 136–139 (NKAD) contribute to the GTP site. The G4 stretch occupies residues 136-139 (NKAD). The interval 174 to 176 (SAL) is G5.

Belongs to the TRAFAC class translation factor GTPase superfamily. Classic translation factor GTPase family. EF-Tu/EF-1A subfamily. Monomer.

The protein resides in the cytoplasm. It catalyses the reaction GTP + H2O = GDP + phosphate + H(+). Its function is as follows. GTP hydrolase that promotes the GTP-dependent binding of aminoacyl-tRNA to the A-site of ribosomes during protein biosynthesis. This is Elongation factor Tu from Coxiella burnetii (strain Dugway 5J108-111).